Reading from the N-terminus, the 604-residue chain is Protein TAX4 (604 aa).

5 disordered regions span residues 38 to 77 (HPNG…PRSI), 133 to 249 (FSNR…RQQE), 267 to 300 (GTLP…QENL), 338 to 380 (DETF…KGLK), and 394 to 428 (PFPH…NEDK). Over residues 176-185 (YDNNVRSRSI) the composition is skewed to polar residues. 2 stretches are compositionally biased toward low complexity: residues 186-203 (SPQV…SISS) and 224-240 (SMSS…KASL). 3 stretches are compositionally biased toward basic residues: residues 276-290 (SQRK…HKLL), 366-379 (KKKK…KKGL), and 396-421 (PHHH…HTSS). An EH domain is found at 469–559 (ANEDDESHLQ…RVWNSVDGYV (91 aa)).

This sequence belongs to the IRS4 family. As to quaternary structure, interacts with INP51.

Functionally, with IRS4, acts as a positive regulator of INP51 activity and phosphatidylinositol 4,5-bisphosphate turnover. Negatively regulates signaling through the cell integrity pathway, including the MAP kinase SLT2. This chain is Protein TAX4 (TAX4), found in Saccharomyces cerevisiae (strain YJM789) (Baker's yeast).